A 121-amino-acid polypeptide reads, in one-letter code: Large ribosomal subunit protein uL18c (121 aa).

The protein belongs to the universal ribosomal protein uL18 family. In terms of assembly, part of the 50S ribosomal subunit; contacts the 5S rRNA.

The protein localises to the plastid. Its subcellular location is the cyanelle. Its function is as follows. Binds 5S rRNA, forms part of the central protuberance of the 50S subunit. The chain is Large ribosomal subunit protein uL18c (rpl18) from Cyanophora paradoxa.